The primary structure comprises 475 residues: Bystin (475 aa).

Composition is skewed to basic residues over residues M1–R12 and K29–K41. Disordered regions lie at residues M1–I57 and D106–V149. Composition is skewed to acidic residues over residues E45–E54 and F107–Q119.

It belongs to the bystin family.

Its subcellular location is the nucleus. It is found in the nucleolus. Its function is as follows. Required for processing of 20S pre-rRNA precursor and biogenesis of 40S ribosomal subunits. The sequence is that of Bystin (bysl) from Dictyostelium discoideum (Social amoeba).